The following is a 280-amino-acid chain: Phosphatidylserine decarboxylase proenzyme (280 aa).

Active-site charge relay system; for autoendoproteolytic cleavage activity residues include Asp-88, His-145, and Ser-249. Ser-249 functions as the Schiff-base intermediate with substrate; via pyruvic acid; for decarboxylase activity in the catalytic mechanism. Ser-249 bears the Pyruvic acid (Ser); by autocatalysis mark.

It belongs to the phosphatidylserine decarboxylase family. PSD-B subfamily. Prokaryotic type I sub-subfamily. As to quaternary structure, heterodimer of a large membrane-associated beta subunit and a small pyruvoyl-containing alpha subunit. Pyruvate is required as a cofactor. In terms of processing, is synthesized initially as an inactive proenzyme. Formation of the active enzyme involves a self-maturation process in which the active site pyruvoyl group is generated from an internal serine residue via an autocatalytic post-translational modification. Two non-identical subunits are generated from the proenzyme in this reaction, and the pyruvate is formed at the N-terminus of the alpha chain, which is derived from the carboxyl end of the proenzyme. The autoendoproteolytic cleavage occurs by a canonical serine protease mechanism, in which the side chain hydroxyl group of the serine supplies its oxygen atom to form the C-terminus of the beta chain, while the remainder of the serine residue undergoes an oxidative deamination to produce ammonia and the pyruvoyl prosthetic group on the alpha chain. During this reaction, the Ser that is part of the protease active site of the proenzyme becomes the pyruvoyl prosthetic group, which constitutes an essential element of the active site of the mature decarboxylase.

It is found in the cell membrane. The enzyme catalyses a 1,2-diacyl-sn-glycero-3-phospho-L-serine + H(+) = a 1,2-diacyl-sn-glycero-3-phosphoethanolamine + CO2. The protein operates within phospholipid metabolism; phosphatidylethanolamine biosynthesis; phosphatidylethanolamine from CDP-diacylglycerol: step 2/2. Its function is as follows. Catalyzes the formation of phosphatidylethanolamine (PtdEtn) from phosphatidylserine (PtdSer). The sequence is that of Phosphatidylserine decarboxylase proenzyme from Chromobacterium violaceum (strain ATCC 12472 / DSM 30191 / JCM 1249 / CCUG 213 / NBRC 12614 / NCIMB 9131 / NCTC 9757 / MK).